A 165-amino-acid polypeptide reads, in one-letter code: Lipoprotein signal peptidase (165 aa).

The next 2 helical transmembrane spans lie at 64–84 (LGRWLLVGVAVLAAAALGAWM) and 88–108 (GSRLLVLSLGLIVGGAVGNAV). Catalysis depends on residues D118 and D136. A helical membrane pass occupies residues 128 to 148 (SWYVFNVADAGIVAGVAGLLV).

This sequence belongs to the peptidase A8 family.

Its subcellular location is the cell inner membrane. The catalysed reaction is Release of signal peptides from bacterial membrane prolipoproteins. Hydrolyzes -Xaa-Yaa-Zaa-|-(S,diacylglyceryl)Cys-, in which Xaa is hydrophobic (preferably Leu), and Yaa (Ala or Ser) and Zaa (Gly or Ala) have small, neutral side chains.. Its pathway is protein modification; lipoprotein biosynthesis (signal peptide cleavage). This protein specifically catalyzes the removal of signal peptides from prolipoproteins. The chain is Lipoprotein signal peptidase from Methylobacterium sp. (strain 4-46).